We begin with the raw amino-acid sequence, 281 residues long: NADPH-dependent 7-cyano-7-deazaguanine reductase (281 aa).

88–90 (VES) serves as a coordination point for substrate. 90 to 91 (SK) provides a ligand contact to NADPH. Catalysis depends on cysteine 189, which acts as the Thioimide intermediate. The active-site Proton donor is aspartate 196. 228-229 (HE) contributes to the substrate binding site. Residue 257–258 (RG) coordinates NADPH.

Belongs to the GTP cyclohydrolase I family. QueF type 2 subfamily. Homodimer.

It localises to the cytoplasm. The enzyme catalyses 7-aminomethyl-7-carbaguanine + 2 NADP(+) = 7-cyano-7-deazaguanine + 2 NADPH + 3 H(+). The protein operates within tRNA modification; tRNA-queuosine biosynthesis. Catalyzes the NADPH-dependent reduction of 7-cyano-7-deazaguanine (preQ0) to 7-aminomethyl-7-deazaguanine (preQ1). The protein is NADPH-dependent 7-cyano-7-deazaguanine reductase of Cronobacter sakazakii (strain ATCC BAA-894) (Enterobacter sakazakii).